The chain runs to 465 residues: GTPase Der (465 aa).

2 consecutive EngA-type G domains span residues 3 to 166 (FLVA…LNEY) and 184 to 358 (IHFS…ACAN). Residues 9 to 16 (GRANVGKS), 56 to 60 (DTGGI), 118 to 121 (NKVD), 190 to 197 (GRPNVGKS), 237 to 241 (DTAGV), and 302 to 305 (NKWD) each bind GTP. Positions 359–443 (KKITTADATC…PIVFEFKQSE (85 aa)) constitute a KH-like domain. The tract at residues 446–465 (FADRKNKRSKDEGSKSKKVK) is disordered.

This sequence belongs to the TRAFAC class TrmE-Era-EngA-EngB-Septin-like GTPase superfamily. EngA (Der) GTPase family. Associates with the 50S ribosomal subunit.

Functionally, GTPase that plays an essential role in the late steps of ribosome biogenesis. The protein is GTPase Der of Francisella tularensis subsp. mediasiatica (strain FSC147).